Consider the following 301-residue polypeptide: Oxygen-dependent coproporphyrinogen-III oxidase (301 aa).

A substrate-binding site is contributed by S94. Positions 98 and 108 each coordinate a divalent metal cation. H108 acts as the Proton donor in catalysis. Substrate is bound at residue 110–112 (NVR). 2 residues coordinate a divalent metal cation: H147 and H177. Positions 242 to 277 (YVEFNLVYDRGTLFGLQSGGRTESILMSMPPLARWE) are important for dimerization. A substrate-binding site is contributed by 260–262 (GGR).

This sequence belongs to the aerobic coproporphyrinogen-III oxidase family. Homodimer. A divalent metal cation is required as a cofactor.

The protein localises to the cytoplasm. It catalyses the reaction coproporphyrinogen III + O2 + 2 H(+) = protoporphyrinogen IX + 2 CO2 + 2 H2O. Its pathway is porphyrin-containing compound metabolism; protoporphyrin-IX biosynthesis; protoporphyrinogen-IX from coproporphyrinogen-III (O2 route): step 1/1. Its function is as follows. Involved in the heme biosynthesis. Catalyzes the aerobic oxidative decarboxylation of propionate groups of rings A and B of coproporphyrinogen-III to yield the vinyl groups in protoporphyrinogen-IX. The polypeptide is Oxygen-dependent coproporphyrinogen-III oxidase (Photobacterium profundum (strain SS9)).